A 385-amino-acid polypeptide reads, in one-letter code: Lipid-A-disaccharide synthase (385 aa).

It belongs to the LpxB family.

The enzyme catalyses a lipid X + a UDP-2-N,3-O-bis[(3R)-3-hydroxyacyl]-alpha-D-glucosamine = a lipid A disaccharide + UDP + H(+). Its pathway is bacterial outer membrane biogenesis; LPS lipid A biosynthesis. In terms of biological role, condensation of UDP-2,3-diacylglucosamine and 2,3-diacylglucosamine-1-phosphate to form lipid A disaccharide, a precursor of lipid A, a phosphorylated glycolipid that anchors the lipopolysaccharide to the outer membrane of the cell. The sequence is that of Lipid-A-disaccharide synthase from Xylella fastidiosa (strain M23).